The sequence spans 223 residues: HTH-type transcriptional dual regulator CecR (223 aa).

Residues E11–I70 enclose the HTH tetR-type domain. Positions T33–F52 form a DNA-binding region, H-T-H motif.

The protein localises to the cytoplasm. Functionally, regulates transcription of the cecR-ybhGFSR operon and the rhlE gene, which altogether are involved in the control of sensitivity to cefoperazone and chloramphenicol. Represses the cecR-ybhGFSR operon and activates the rhlE operon. Acts by binding to a palindromic sequence within the intergenic spacer located between these two divergently transcribed operons. The sequence is that of HTH-type transcriptional dual regulator CecR from Shigella flexneri.